The primary structure comprises 325 residues: Sel1-repeat-containing protein YbeQ (325 aa).

8 Sel1-like repeats span residues 26–61, 63–97, 103–130, 132–167, 168–203, 205–239, 242–275, and 280–305; these read EAQY…EQGH, EAQY…LQGH, ALGW…AESG, SYAQ…LQGH, SDAQ…QQGN, HAQF…AQGS, AYVN…ECND, and YNLA…LYRK.

The protein to E.coli YbeT.

The protein is Sel1-repeat-containing protein YbeQ (ybeQ) of Escherichia coli (strain K12).